We begin with the raw amino-acid sequence, 1754 residues long: Probable outer membrane protein PmpB (1754 aa).

The first 14 residues, M1–A14, serve as a signal peptide directing secretion. Low complexity-rich tracts occupy residues N68–P105 and S212–S232. Disordered regions lie at residues N68–G109, S190–E235, P252–G271, N397–K438, A621–S668, and T1299–P1332. Polar residues-rich tracts occupy residues P252 to S264 and A402 to A412. Composition is skewed to low complexity over residues T413–S427, P636–S668, T1299–S1311, and S1320–P1332. One can recognise an Autotransporter domain in the interval D1461 to F1754.

The protein belongs to the PMP outer membrane protein family.

Its subcellular location is the secreted. The protein localises to the cell wall. It is found in the cell outer membrane. This is Probable outer membrane protein PmpB (pmpB) from Chlamydia trachomatis serovar D (strain ATCC VR-885 / DSM 19411 / UW-3/Cx).